Here is a 1404-residue protein sequence, read N- to C-terminus: DNA-directed RNA polymerase subunit beta' (1404 aa).

Zn(2+) is bound by residues C70, C72, C85, and C88. Positions 460, 462, and 464 each coordinate Mg(2+). Zn(2+) is bound by residues C814, C888, C895, and C898.

It belongs to the RNA polymerase beta' chain family. The RNAP catalytic core consists of 2 alpha, 1 beta, 1 beta' and 1 omega subunit. When a sigma factor is associated with the core the holoenzyme is formed, which can initiate transcription. The cofactor is Mg(2+). Zn(2+) is required as a cofactor.

It catalyses the reaction RNA(n) + a ribonucleoside 5'-triphosphate = RNA(n+1) + diphosphate. Functionally, DNA-dependent RNA polymerase catalyzes the transcription of DNA into RNA using the four ribonucleoside triphosphates as substrates. The polypeptide is DNA-directed RNA polymerase subunit beta' (Shewanella halifaxensis (strain HAW-EB4)).